Here is a 649-residue protein sequence, read N- to C-terminus: Transcription factor E2-alpha (649 aa).

Disordered stretches follow at residues 34–107 (GKGR…SERS), 127–206 (LPGE…SAKT), 222–267 (LHPS…GLQQ), 291–325 (SAAPGTYGGASGHTPPVSGADSLMGTRGTTASSSG), and 339–382 (DHSS…DGGL). Composition is skewed to polar residues over residues 56 to 76 (SSGSWGNSDQNSSSFDPSRTY) and 85 to 94 (SHNSLPSSTF). Low complexity predominate over residues 127–143 (LPGELGLSSPGPLSPSG). A phosphoserine mark is found at Ser-135 and Ser-140. The segment covering 145–156 (KSGSQYYPSYPS) has biased composition (polar residues). The short motif at 171-177 (SKKVRKV) is the Nuclear localization signal element. Low complexity-rich tracts occupy residues 182–193 (PSSVYPSSSGDS) and 242–259 (GDGSSPLPLAPGSSSVGS). Residues 339-352 (DHSSNNFSPSPSTP) show a composition bias toward low complexity. Residue Thr-351 is modified to Phosphothreonine. The residue at position 355 (Ser-355) is a Phosphoserine. Arg-367 is modified (omega-N-methylarginine). Ser-375 is modified (phosphoserine). The segment at 385–420 (LSKMEDRLDEAIHVLRSHAVGTASDLHGLLPGHGAL) is leucine-zipper. Residues 431–547 (GGRHAGLVGG…KAEREKERRV (117 aa)) form a disordered region. Positions 448 to 469 (TSGTSLLHTHASLPSQASSLPD) are enriched in polar residues. Lys-494 is covalently cross-linked (Glycyl lysine isopeptide (Lys-Gly) (interchain with G-Cter in SUMO2)). A Phosphoserine modification is found at Ser-524. Position 529 is a phosphothreonine (Glu-529). Basic and acidic residues predominate over residues 537–547 (QKAEREKERRV). The 54-residue stretch at 544–597 (ERRVANNARERLRVRDINEAFKELGRMCQLHLSSEKPQTKLLILHQAVAVILSL) folds into the bHLH domain. A Glycyl lysine isopeptide (Lys-Gly) (interchain with G-Cter in SUMO2) cross-link involves residue Lys-620.

Homodimer. Heterodimer; efficient DNA binding requires dimerization with another bHLH protein. Forms a heterodimer with TWIST1 and TWIST2. Forms a heterodimer with NEUROD1; the heterodimer is inhibited in presence of ID2, but not NR0B2, to E-box element. Forms a heterodimer with TCF15; the heterodimer binds E-box element. Forms a heterodimer with MYOG; heterodimerization enhances MYOG DNA-binding and transcriptional activities. Forms a heterodimer with ATOH8; repress transcription of TCF3 and TCF3-NEUROG3 dimer-induced transactivation of E box-dependent promoters. Component of a nuclear TAL-1 complex composed at least of CBFA2T3, LDB1, TAL1 and TCF3. Interacts with NEUROD2. Interacts with EP300. Interacts with PTF1A, TGFB1I1 and UBE2I. Interacts with BHLHA9. Interacts with ASB2; the interaction is mediated by SKP2 and targets TCF3 for Notch-induced proteasomal degradation. Interacts with transcription factor ASCL5/AmeloD. As to quaternary structure, interacts with RALGAPA1. Interacts with FIGLA. In terms of assembly, forms a heterodimer with ATOH7; required for ATOH7 DNA-binding. Phosphorylated following NGF stimulation. In terms of processing, undergoes Notch-induced ubiquitination and subsequent proteasomal degradation which is mediated by ASB1 or ASB2, the substrate-recognition components of probable ECS E3 ubiquitin-protein ligase complexes.

The protein localises to the nucleus. In terms of biological role, transcriptional regulator. Involved in the initiation of neuronal differentiation and mesenchymal to epithelial transition. Heterodimers between TCF3 and tissue-specific basic helix-loop-helix (bHLH) proteins play major roles in determining tissue-specific cell fate during embryogenesis, like muscle or early B-cell differentiation. Together with TCF15, required for the mesenchymal to epithelial transition. Dimers bind DNA on E-box motifs: 5'-CANNTG-3'. Binds to the kappa-E2 site in the kappa immunoglobulin gene enhancer. Binds to IEB1 and IEB2, which are short DNA sequences in the insulin gene transcription control region. Functionally, facilitates ATOH7 binding to DNA at the consensus sequence 5'-CAGGTG-3', and positively regulates transcriptional activity. The protein is Transcription factor E2-alpha (TCF3) of Mesocricetus auratus (Golden hamster).